The chain runs to 142 residues: MKTISAKPETVKRDWYIIDADGKTLGRMAAEIAHRLRGKHKPEFTPHVDTGDYIVVINAEKVRVTGRKATDKMYYSHTGFIGGIKSISFEKLIDKAPERTIQNAVKGMLPRGPLGRAMFKKLKVYGGSEHPHTAQQPQELNI.

The protein belongs to the universal ribosomal protein uL13 family. In terms of assembly, part of the 50S ribosomal subunit.

This protein is one of the early assembly proteins of the 50S ribosomal subunit, although it is not seen to bind rRNA by itself. It is important during the early stages of 50S assembly. In Saccharophagus degradans (strain 2-40 / ATCC 43961 / DSM 17024), this protein is Large ribosomal subunit protein uL13.